A 369-amino-acid chain; its full sequence is Queuine tRNA-ribosyltransferase accessory subunit 2 (369 aa).

Residues 263 to 282 are disordered; that stretch reads SSKLTEVEEENGNDSSNDQD. Positions 308, 310, 313, and 339 each coordinate Zn(2+).

This sequence belongs to the queuine tRNA-ribosyltransferase family. QTRT2 subfamily. In terms of assembly, heterodimer of a catalytic subunit and an accessory subunit. The cofactor is Zn(2+).

Its subcellular location is the cytoplasm. Its function is as follows. Non-catalytic subunit of the queuine tRNA-ribosyltransferase (TGT) that catalyzes the base-exchange of a guanine (G) residue with queuine (Q) at position 34 (anticodon wobble position) in tRNAs with GU(N) anticodons (tRNA-Asp, -Asn, -His and -Tyr), resulting in the hypermodified nucleoside queuosine (7-(((4,5-cis-dihydroxy-2-cyclopenten-1-yl)amino)methyl)-7-deazaguanosine). This chain is Queuine tRNA-ribosyltransferase accessory subunit 2, found in Trichoplax adhaerens (Trichoplax reptans).